A 504-amino-acid polypeptide reads, in one-letter code: Histidine--tRNA ligase (504 aa).

Belongs to the class-II aminoacyl-tRNA synthetase family. In terms of assembly, homodimer.

The protein resides in the cytoplasm. The catalysed reaction is tRNA(His) + L-histidine + ATP = L-histidyl-tRNA(His) + AMP + diphosphate + H(+). In Rhizobium meliloti (strain 1021) (Ensifer meliloti), this protein is Histidine--tRNA ligase (hisS).